A 557-amino-acid polypeptide reads, in one-letter code: Hyaluronan synthase 3 (557 aa).

Over M1–R10 the chain is Cytoplasmic. A helical membrane pass occupies residues V11–T31. Over G32–S44 the chain is Extracellular. The helical transmembrane segment at F45–L65 threads the bilayer. The Cytoplasmic segment spans residues E66–L367. Residues W368 to V388 form a helical membrane-spanning segment. Over Q389–N398 the chain is Extracellular. Residues I399–I419 form a helical membrane-spanning segment. Residues L420–S430 are Cytoplasmic-facing. Residues L431–I451 traverse the membrane as a helical segment. At K452–K463 the chain is on the extracellular side. A helical membrane pass occupies residues L464–G484. The Cytoplasmic portion of the chain corresponds to L485–E501. Residues L502–L522 traverse the membrane as a helical segment. Residues Y523–P557 are Extracellular-facing.

Belongs to the NodC/HAS family. It depends on Mg(2+) as a cofactor. O-GlcNAcylation increases the hyaluronan synthase activity, HAS3 stability and its plasma membrane residence. The concentration of UDP-GlcNAc controls the level of O-GlcNAc modification.

It is found in the cell membrane. Its subcellular location is the golgi apparatus membrane. The protein localises to the golgi apparatus. The protein resides in the trans-Golgi network membrane. It localises to the cytoplasmic vesicle. The enzyme catalyses [hyaluronan](n) + UDP-N-acetyl-alpha-D-glucosamine = N-acetyl-beta-D-glucosaminyl-(1-&gt;4)-[hyaluronan](n) + UDP + H(+). It carries out the reaction N-acetyl-beta-D-glucosaminyl-(1-&gt;4)-[hyaluronan](n) + UDP-alpha-D-glucuronate = [hyaluronan](n+1) + UDP + H(+). It participates in glycan biosynthesis; hyaluronan biosynthesis. Functionally, catalyzes the addition of GlcNAc or GlcUA monosaccharides to the nascent hyaluronan polymer. Therefore, it is essential to hyaluronan synthesis a major component of most extracellular matrices that has a structural role in tissues architectures and regulates cell adhesion, migration and differentiation. This is one of three isoenzymes responsible for cellular hyaluronan synthesis. This chain is Hyaluronan synthase 3 (has3), found in Xenopus laevis (African clawed frog).